The primary structure comprises 198 residues: Photosystem I assembly protein Ycf4 (198 aa).

2 consecutive transmembrane segments (helical) span residues Trp35–Ile57 and Ile70–Asn92.

This sequence belongs to the Ycf4 family.

The protein localises to the plastid. Its subcellular location is the chloroplast thylakoid membrane. Functionally, seems to be required for the assembly of the photosystem I complex. In Euglena gracilis, this protein is Photosystem I assembly protein Ycf4.